Here is a 318-residue protein sequence, read N- to C-terminus: MTSKLEQLKQFTDVVADTGDIEAIRLYKPLDATTNPSLVYKAAQMPQYQALLDTSINGAKSITNSAEQLSAASDNLAVGIGLEILKLVPGRISTEVDARLSFDTNASIAKARHLISLYEKGGVDKSRVLIKLASTWEGIRAAEILEKEGINCNLTLLFGFNQAAACADAGVFLISPFVGRILDWYKANTNKKEYAAEEDPGVVSVRRIYNYYKQHGYNTVVMGASFRNIGEIEALAGCDRLTISPQLLQELDQDKGELKRVLSPDNRGEAIAKLIDTEASFRFGLNQDAMATEKLAEGIRGFVKDQINLENLLKSRAQ.

K131 serves as the catalytic Schiff-base intermediate with substrate.

It belongs to the transaldolase family. Type 1 subfamily. Homodimer.

The protein resides in the cytoplasm. It carries out the reaction D-sedoheptulose 7-phosphate + D-glyceraldehyde 3-phosphate = D-erythrose 4-phosphate + beta-D-fructose 6-phosphate. It functions in the pathway carbohydrate degradation; pentose phosphate pathway; D-glyceraldehyde 3-phosphate and beta-D-fructose 6-phosphate from D-ribose 5-phosphate and D-xylulose 5-phosphate (non-oxidative stage): step 2/3. Its function is as follows. Transaldolase is important for the balance of metabolites in the pentose-phosphate pathway. The sequence is that of Transaldolase from Cellvibrio japonicus (strain Ueda107) (Pseudomonas fluorescens subsp. cellulosa).